The following is a 366-amino-acid chain: MRSVLSFEKLDSIGEGTYGIVSKGRDKETGRIVALKKVKIGQQDKDGIPLTSLREIQILKEIKHPNIVSLLEVVIGSTGDKIYLVFEYLEHDVASLIDNINKPFKLSEIKCFLLQLLRAVEYLHSHWIIHRDLKCSNLLYGNNGNLKLADFGLARKFGYPIESITPCMVTLWYRSPELLLGCQKYSTAVDLWSIGSIFGELLIGRPLITGNNEVDQIMRIFNLLGEPNEQIWPGFSSLPNFKRLNNIPHQPYNNLRELVPTISDTAFDLLNQLLTYDPTKRITASDAIKHPFFYENPFPQSIEMMPKFPTISKSFKNQNKKQNNNFNNFVQNNQTNQNNQTNQNNQTNQNNKTSQNNNMDSYKYSK.

In terms of domain architecture, Protein kinase spans 7–293 (FEKLDSIGEG…ASDAIKHPFF (287 aa)). ATP contacts are provided by residues 13-21 (IGEGTYGIV) and Lys36. Asp132 acts as the Proton acceptor in catalysis. Positions 315 to 358 (FKNQNKKQNNNFNNFVQNNQTNQNNQTNQNNQTNQNNKTSQNNN) are enriched in low complexity. The tract at residues 315–366 (FKNQNKKQNNNFNNFVQNNQTNQNNQTNQNNQTNQNNKTSQNNNMDSYKYSK) is disordered.

The protein belongs to the protein kinase superfamily. CMGC Ser/Thr protein kinase family. CDC2/CDKX subfamily.

The enzyme catalyses L-seryl-[protein] + ATP = O-phospho-L-seryl-[protein] + ADP + H(+). It catalyses the reaction L-threonyl-[protein] + ATP = O-phospho-L-threonyl-[protein] + ADP + H(+). The sequence is that of Probable cyclin-dependent kinase 10 (cdk10) from Dictyostelium discoideum (Social amoeba).